Reading from the N-terminus, the 237-residue chain is DNA repair protein RecO (237 aa).

The protein belongs to the RecO family.

Its function is as follows. Involved in DNA repair and RecF pathway recombination. The sequence is that of DNA repair protein RecO from Rickettsia felis (strain ATCC VR-1525 / URRWXCal2) (Rickettsia azadi).